We begin with the raw amino-acid sequence, 134 residues long: Ribosome-binding factor A (134 aa).

The protein belongs to the RbfA family. In terms of assembly, monomer. Binds 30S ribosomal subunits, but not 50S ribosomal subunits or 70S ribosomes.

It is found in the cytoplasm. In terms of biological role, one of several proteins that assist in the late maturation steps of the functional core of the 30S ribosomal subunit. Associates with free 30S ribosomal subunits (but not with 30S subunits that are part of 70S ribosomes or polysomes). Required for efficient processing of 16S rRNA. May interact with the 5'-terminal helix region of 16S rRNA. This chain is Ribosome-binding factor A, found in Tolumonas auensis (strain DSM 9187 / NBRC 110442 / TA 4).